Consider the following 722-residue polypeptide: Polyribonucleotide nucleotidyltransferase (722 aa).

D487 and D493 together coordinate Mg(2+). One can recognise a KH domain in the interval 554–613 (PRIETFKIPTDKIREVIGTGGKVIREIVEKTGAKVNIEDDGTVKVASSDGESIKAAIKWI). In terms of domain architecture, S1 motif spans 623–691 (GEIYEGTVVK…DRGKTRLSMK (69 aa)). The disordered stretch occupies residues 691–722 (KVVDQDTGEDLEAKQKAEAKAEDEAPAQAAGE). Residues 701 to 713 (LEAKQKAEAKAED) are compositionally biased toward basic and acidic residues.

It belongs to the polyribonucleotide nucleotidyltransferase family. The cofactor is Mg(2+).

Its subcellular location is the cytoplasm. It catalyses the reaction RNA(n+1) + phosphate = RNA(n) + a ribonucleoside 5'-diphosphate. Functionally, involved in mRNA degradation. Catalyzes the phosphorolysis of single-stranded polyribonucleotides processively in the 3'- to 5'-direction. This chain is Polyribonucleotide nucleotidyltransferase, found in Rhodopseudomonas palustris (strain BisB5).